The chain runs to 447 residues: Serine/threonine-protein phosphatase 2A 55 kDa regulatory subunit B delta isoform (447 aa).

WD repeat units lie at residues alanine 26–proline 65, glutamate 91–glutamate 132, alanine 175–asparagine 213, glutamate 224–arginine 264, glutamate 283–glutamate 321, glutamate 338–leucine 379, and aspartate 414–asparagine 447.

It belongs to the phosphatase 2A regulatory subunit B family. As to quaternary structure, PP2A consists of a common heterodimeric core enzyme, composed of a 36 kDa catalytic subunit (subunit C) and a 65 kDa constant regulatory subunit (PR65 or subunit A), that associates with a variety of regulatory subunits. Proteins that associate with the core dimer include three families of regulatory subunits B (the R2/B/PR55/B55, R3/B''/PR72/PR130/PR59 and R5/B'/B56 families), the 48 kDa variable regulatory subunit, viral proteins, and cell signaling molecules. Interacts with ensa (when phosphorylated at 'Ser-67') and arpp19 (when phosphorylated at 'Ser-67'), leading to inhibit PP2A activity.

It localises to the cytoplasm. Functionally, substrate-recognition subunit of protein phosphatase 2A (PP2A) that plays a key role in cell cycle by controlling mitosis entry and exit. The activity of PP2A complexes containing ppp2r2d (PR55-delta) fluctuate during the cell cycle: the activity is high in interphase and low in mitosis. During mitosis, activity of PP2A is inhibited via interaction with phosphorylated ensa and arpp19 inhibitors. PP2A complexes containing ppp2r2d (PR55-delta) also regulate the activity of TGF-beta/Activin/Nodal signaling by restricting receptor activity. Within the PP2A complexes, the B regulatory subunits modulate substrate selectivity and catalytic activity, and may also direct the localization of the catalytic enzyme to a particular subcellular compartment. In Xenopus laevis (African clawed frog), this protein is Serine/threonine-protein phosphatase 2A 55 kDa regulatory subunit B delta isoform (ppp2r2d).